A 456-amino-acid chain; its full sequence is Probable glycine dehydrogenase (decarboxylating) subunit 1 (456 aa).

Belongs to the GcvP family. N-terminal subunit subfamily. The glycine cleavage system is composed of four proteins: P, T, L and H. In this organism, the P 'protein' is a heterodimer of two subunits.

It carries out the reaction N(6)-[(R)-lipoyl]-L-lysyl-[glycine-cleavage complex H protein] + glycine + H(+) = N(6)-[(R)-S(8)-aminomethyldihydrolipoyl]-L-lysyl-[glycine-cleavage complex H protein] + CO2. The glycine cleavage system catalyzes the degradation of glycine. The P protein binds the alpha-amino group of glycine through its pyridoxal phosphate cofactor; CO(2) is released and the remaining methylamine moiety is then transferred to the lipoamide cofactor of the H protein. In Legionella pneumophila (strain Paris), this protein is Probable glycine dehydrogenase (decarboxylating) subunit 1.